Reading from the N-terminus, the 330-residue chain is Transcription factor zip1 (330 aa).

A compositionally biased stretch (basic and acidic residues) spans 133–148 (SKETQEKTSSQRELFE). Disordered stretches follow at residues 133–165 (SKET…SSSS) and 238–277 (PSLS…NTAA). Residues 150–165 (KSSVASASKDNVSSSS) show a composition bias toward low complexity. Polar residues predominate over residues 244–262 (KGAQSPNANSKRTKATSAI). Residues 264-327 (TAAEEDKRRR…NWLKGLIRPT (64 aa)) enclose the bZIP domain. Residues 270–288 (KRRRNTAASARFRIKKKLK) are basic motif. The segment at 292-320 (LERTAKELTEKVAILETRVRELEMENNWL) is leucine-zipper.

It belongs to the bZIP family. As to quaternary structure, interacts with pof1.

The protein localises to the nucleus. In terms of biological role, mediates cell growth arrest in response to cadmium exposure, which is essential to maintain cell viability. Regulates cadmium stress specific genes. The chain is Transcription factor zip1 (zip1) from Schizosaccharomyces pombe (strain 972 / ATCC 24843) (Fission yeast).